The chain runs to 193 residues: Ion-translocating oxidoreductase complex subunit A (193 aa).

The next 6 helical transmembrane spans lie at 5–25 (LLLFIGTVLVNNFVLVKFLGL), 47–67 (FVITLASICAWLVNHLILLPL), 72–92 (LRTMAYILVIAVVVQFTEMVV), 102–122 (LLGIFLPLITTNCAVLGVPLL), 134–154 (AIYGFSASIGFSLVMVLFAGV), and 171–191 (SIALVTAGLMALAFMGFAGLV).

This sequence belongs to the NqrDE/RnfAE family. As to quaternary structure, the complex is composed of six subunits: RnfA, RnfB, RnfC, RnfD, RnfE and RnfG.

It is found in the cell inner membrane. Part of a membrane-bound complex that couples electron transfer with translocation of ions across the membrane. The chain is Ion-translocating oxidoreductase complex subunit A from Erwinia tasmaniensis (strain DSM 17950 / CFBP 7177 / CIP 109463 / NCPPB 4357 / Et1/99).